The primary structure comprises 480 residues: Ribulose bisphosphate carboxylase large chain (480 aa).

Positions 1–2 (MS) are excised as a propeptide. The residue at position 3 (P3) is an N-acetylproline. K14 is modified (N6,N6,N6-trimethyllysine). 2 residues coordinate substrate: N123 and T173. The active-site Proton acceptor is K175. A substrate-binding site is contributed by K177. Mg(2+) is bound by residues K201, D203, and E204. Residue K201 is modified to N6-carboxylysine. The active-site Proton acceptor is H294. Substrate-binding residues include R295, H327, and S379.

The protein belongs to the RuBisCO large chain family. Type I subfamily. Heterohexadecamer of 8 large chains and 8 small chains; disulfide-linked. The disulfide link is formed within the large subunit homodimers. The cofactor is Mg(2+). Post-translationally, the disulfide bond which can form in the large chain dimeric partners within the hexadecamer appears to be associated with oxidative stress and protein turnover.

It localises to the plastid. It is found in the chloroplast. The enzyme catalyses 2 (2R)-3-phosphoglycerate + 2 H(+) = D-ribulose 1,5-bisphosphate + CO2 + H2O. It catalyses the reaction D-ribulose 1,5-bisphosphate + O2 = 2-phosphoglycolate + (2R)-3-phosphoglycerate + 2 H(+). Functionally, ruBisCO catalyzes two reactions: the carboxylation of D-ribulose 1,5-bisphosphate, the primary event in carbon dioxide fixation, as well as the oxidative fragmentation of the pentose substrate in the photorespiration process. Both reactions occur simultaneously and in competition at the same active site. The polypeptide is Ribulose bisphosphate carboxylase large chain (Rivina humilis (Rougeplant)).